Here is a 377-residue protein sequence, read N- to C-terminus: Circumsporozoite protein (377 aa).

An N-terminal signal peptide occupies residues 1-22 (MKNFILLAVSSILLVDLFPTHC). Residues 51-294 (HVGQSASRGR…NNEGANAPNE (244 aa)) are disordered. The segment covering 72-100 (DAKKKKDGKKAEPKNPRENKLKQPGDRAD) has biased composition (basic and acidic residues). A required for the binding to heparan sulfate proteoglycans (HSPGs) on the surface of host hepatocytes region spans residues 80 to 88 (KKAEPKNPR). The tract at residues 91-95 (KLKQP) is region I; contains the proteolytic cleavage site. Repeat copies occupy residues 95–103 (PGDRADGQP), 104–112 (AGDRADGQP), 113–121 (AGDRADGQP), 122–130 (AGDRADGQP), 131–139 (AGDRAAGQP), 140–148 (AGDRADGQP), 149–157 (AGDRADGQP), 158–166 (AGDRADGQP), 167–175 (AGDRADGQP), 176–184 (AGDRAAGQP), 185–193 (AGDRAAGQP), 194–202 (AGDRADGQP), 203–211 (AGDRAAGQP), 212–220 (AGDRADGQP), 221–229 (AGDRAAGQP), 230–238 (AGDRADGQP), 239–247 (AGDRAAGQP), 248–256 (AGDRAAGQP), 257–265 (AGDRAAGQA), and 266–274 (AGDRAAGQA). A 20 X 9 AA tandem repeats of [PA]-G-D-R-A-[DA]-G-Q-[PA] region spans residues 95–274 (PGDRADGQPA…AAGDRAAGQA (180 aa)). The segment covering 236–273 (GQPAGDRAAGQPAGDRAAGQPAGDRAAGQAAGDRAAGQ) has biased composition (low complexity). Gly residues predominate over residues 274–283 (AAGGNAGGQG). The segment covering 284-293 (QNNEGANAPN) has biased composition (low complexity). The TSP type-1 domain occupies 303-355 (KVRATVGTEWTPCSVTCGVGVRVRRRVNAANKKPEDLTLNDLETDVCTMDKCA). 2 cysteine pairs are disulfide-bonded: Cys315–Cys349 and Cys319–Cys354. Thr318 carries O-linked (Fuc) threonine glycosylation. A lipid anchor (GPI-anchor amidated cysteine) is attached at Cys354. Residues 355-377 (AGIFNVVSNSLGLVILLVLALFN) constitute a propeptide, removed in mature form.

The protein belongs to the plasmodium circumsporozoite protein family. During host cell invasion, proteolytically cleaved at the cell membrane in the region I by a papain-like cysteine protease of parasite origin. Cleavage is triggered by the sporozoite contact with highly sulfated heparan sulfate proteoglycans (HSPGs) present on the host hepatocyte cell surface. Cleavage exposes the TSP type-1 (TSR) domain and is required for productive invasion of host hepatocytes but not for adhesion to the host cell membrane. Cleavage is dispensable for sporozoite development in the oocyst, motility and for traversal of host and vector cells. In terms of processing, O-glycosylated; maybe by POFUT2.

It localises to the cell membrane. The protein resides in the cytoplasm. Its function is as follows. Essential sporozoite protein. In the mosquito vector, required for sporozoite development in the oocyst, migration through the vector hemolymph and entry into the vector salivary glands. In the vertebrate host, required for sporozoite migration through the host dermis and infection of host hepatocytes. Binds to highly sulfated heparan sulfate proteoglycans (HSPGs) on the surface of host hepatocytes. Functionally, in the vertebrate host, binds to highly sulfated heparan sulfate proteoglycans (HSPGs) on the surface of host hepatocytes and is required for sporozoite invasion of the host hepatocytes. The sequence is that of Circumsporozoite protein from Plasmodium vivax (strain Salvador I).